Reading from the N-terminus, the 171-residue chain is Orange carotenoid-binding domain-containing protein (171 aa).

An OCP N-terminal domain is found at 21-171 (GDAVASTITV…ADMGVDPLAD (151 aa)).

The protein belongs to the orange carotenoid-binding protein family. Requires 3'-hydroxyechinenone as cofactor.

The protein localises to the cellular thylakoid membrane. Functionally, might act as a photo-protectant, protecting against damage induced by excess light via a process known as non-photochemical quenching (NPQ). The chain is Orange carotenoid-binding domain-containing protein from Nostoc sp. (strain PCC 7120 / SAG 25.82 / UTEX 2576).